The sequence spans 157 residues: Ribonuclease H (157 aa).

The RNase H type-1 domain maps to 1-146; it reads MPDLFAYTDG…ADELARAGMA (146 aa). Asp9, Glu52, Asp74, and Asp138 together coordinate Mg(2+).

The protein belongs to the RNase H family. As to quaternary structure, monomer. The cofactor is Mg(2+).

The protein resides in the cytoplasm. The catalysed reaction is Endonucleolytic cleavage to 5'-phosphomonoester.. In terms of biological role, endonuclease that specifically degrades the RNA of RNA-DNA hybrids. The protein is Ribonuclease H of Ruegeria sp. (strain TM1040) (Silicibacter sp.).